The primary structure comprises 507 residues: Flagellar hook-associated protein 1 (507 aa).

Belongs to the flagella basal body rod proteins family.

It localises to the secreted. Its subcellular location is the bacterial flagellum. The sequence is that of Flagellar hook-associated protein 1 (flgK) from Bacillus subtilis (strain 168).